An 81-amino-acid chain; its full sequence is IPPSRSSDCRCVPITLIVGFCIHPTGLSSVAKMIDEHPNLCQSDDECMKKGSGNFCARYPNNYIDYGWCFGSDSEALKGFL.

Residues 27–34 (LSSVAKMI) constitute a propeptide that is removed on maturation.

In terms of processing, three disulfide bonds are probably present. The C-terminal glycine may be removed from A1b.

A1b binds to basic 7S globulin (BG) and stimulates its phosphorylation activity. The protein is Albumin-1 (LEG1) of Lupinus angustifolius (Narrow-leaved blue lupine).